We begin with the raw amino-acid sequence, 75 residues long: Brevinin-2SN2 (75 aa).

The first 22 residues, 1 to 22, serve as a signal peptide directing secretion; sequence MFTLKKPLLFLFFLGTISLSFC. Positions 23–40 are cleaved as a propeptide — removed in mature form; that stretch reads EEERGADEDDGGEMTEEE. An intrachain disulfide couples C69 to C75.

This sequence belongs to the frog skin active peptide (FSAP) family. Brevinin subfamily. In terms of tissue distribution, expressed by the skin glands.

Its subcellular location is the secreted. Antimicrobial peptide. Active against some Gram-negative and a variety of Gram-positive bacterial strains. Active against fungus C.glabrata 090902 but not against C.albicans ATCC 10231. Shows hemolytic activity against human erythrocytes. This is Brevinin-2SN2 from Sylvirana spinulosa (Fine-spined frog).